The sequence spans 365 residues: Putrescine 2-hydroxylase (365 aa).

The Rieske domain maps to 44-141 (GHELMVPEVG…LQNWNGLLFE (98 aa)). [2Fe-2S] cluster is bound by residues Cys-81, His-83, Cys-100, and His-103.

The protein belongs to the bacterial ring-hydroxylating dioxygenase alpha subunit family. It depends on [2Fe-2S] cluster as a cofactor.

Functionally, rieske-type iron sulfur protein that can catalyze in vitro the 2-hydroxylation of putrescine, forming 2-hydroxyputrescine. May be involved in the biosynthesis of the cyclic hydroxamate siderophore alcaligin. This is Putrescine 2-hydroxylase from Ralstonia nicotianae (strain ATCC BAA-1114 / GMI1000) (Ralstonia solanacearum).